Here is a 136-residue protein sequence, read N- to C-terminus: Large ribosomal subunit protein uL16c (136 aa).

Belongs to the universal ribosomal protein uL16 family. In terms of assembly, part of the 50S ribosomal subunit.

Its subcellular location is the plastid. It is found in the chloroplast. In Mesostigma viride (Green alga), this protein is Large ribosomal subunit protein uL16c.